The chain runs to 151 residues: Putative phosphatidylglycerol/phosphatidylinositol transfer protein 1 (151 aa).

The N-terminal stretch at 1-26 (MKHSKNQIVYITFFIIILIVVKPIES) is a signal peptide.

This sequence belongs to the NPC2 family. As to quaternary structure, monomer.

Functionally, catalyzes the intermembrane transfer of phosphatidylglycerol and phosphatidylinositol. The chain is Putative phosphatidylglycerol/phosphatidylinositol transfer protein 1 from Dictyostelium discoideum (Social amoeba).